Reading from the N-terminus, the 140-residue chain is Histone H2B (140 aa).

Basic and acidic residues predominate over residues 1 to 10; that stretch reads MPPKAAEKKP. The segment at 1–48 is disordered; that stretch reads MPPKAAEKKPSTGGKAPAGKAPAEKKEAGKKTAAAASGEKKKRGKTRK. K8 and K9 each carry N6-acetyllysine; alternate. Glycyl lysine isopeptide (Lys-Gly) (interchain with G-Cter in SUMO); alternate cross-links involve residues K8 and K9. The segment covering 11-21 has biased composition (low complexity); sequence STGGKAPAGKA. K15 is subject to N6-acetyllysine. K25 is subject to N6-acetyllysine; alternate. Residue K25 forms a Glycyl lysine isopeptide (Lys-Gly) (interchain with G-Cter in SUMO); alternate linkage. Residue K26 forms a Glycyl lysine isopeptide (Lys-Gly) (interchain with G-Cter in SUMO) linkage. A Glycyl lysine isopeptide (Lys-Gly) (interchain with G-Cter in ubiquitin) cross-link involves residue K134.

The protein belongs to the histone H2B family. In terms of assembly, the nucleosome is a histone octamer containing two molecules each of H2A, H2B, H3 and H4 assembled in one H3-H4 heterotetramer and two H2A-H2B heterodimers. The octamer wraps approximately 147 bp of DNA. In terms of processing, monoubiquitinated by the ubc2-bre1 complex to form H2BK123ub1. H2BK123ub1 gives a specific tag for epigenetic transcriptional activation and is also prerequisite for H3K4me and H3K79me formation. H2BK123ub1 also modulates the formation of double-strand breaks during meiosis and is a prerequisite for DNA-damage checkpoint activation. Acetylated by gcn5 to form H2BK11ac and H2BK16ac. H2BK16ac can also be formed by esa1. Acetylation of N-terminal lysines and particularly formation of H2BK11acK16ac has a positive effect on transcription. Post-translationally, sumoylation to form H2BK6su or H2BK7su, and probably also H2BK16su or H2BK17su, occurs preferentially near the telomeres and represses gene transcription.

The protein resides in the nucleus. Its subcellular location is the chromosome. In terms of biological role, core component of nucleosome. Nucleosomes wrap and compact DNA into chromatin, limiting DNA accessibility to the cellular machineries which require DNA as a template. Histones thereby play a central role in transcription regulation, DNA repair, DNA replication and chromosomal stability. DNA accessibility is regulated via a complex set of post-translational modifications of histones, also called histone code, and nucleosome remodeling. The protein is Histone H2B (htbA) of Emericella nidulans (strain FGSC A4 / ATCC 38163 / CBS 112.46 / NRRL 194 / M139) (Aspergillus nidulans).